The following is a 313-amino-acid chain: Olfactory receptor 1M1 (313 aa).

The Extracellular portion of the chain corresponds to 1–25; the sequence is MEPRNQTSASQFILLGLSEKPEQET. N-linked (GlcNAc...) asparagine glycosylation occurs at Asn5. Residues 26–49 traverse the membrane as a helical segment; sequence LLFSLFFCMYLVMVVGNLLIILAI. Topologically, residues 50-57 are cytoplasmic; that stretch reads SIDSHLHT. A helical membrane pass occupies residues 58-79; that stretch reads PMYFFLANLSLVDFCLATNTIP. The Extracellular portion of the chain corresponds to 80–100; that stretch reads KMLVSLQTGSKAISYPCCLIQ. A disulfide bridge links Cys97 with Cys189. The chain crosses the membrane as a helical span at residues 101–120; that stretch reads MYFFHFFGIVDSVIIAMMAY. Residues 121 to 139 are Cytoplasmic-facing; sequence DRFVAICHPLHYAKIMSLR. The helical transmembrane segment at 140 to 158 threads the bilayer; the sequence is LCRLLVGALWAFSCFISLT. Over 159-196 the chain is Extracellular; the sequence is HILLMARLVFCGSHEVPHYFCDLTPILRLSCTDTSVNR. A helical transmembrane segment spans residues 197–219; it reads IFILIVAGMVIATPFVCILASYA. Over 220-236 the chain is Cytoplasmic; that stretch reads RILVAIMKVPSAGGRKK. A helical transmembrane segment spans residues 237 to 259; it reads AFSTCSSHLSVVALFYGTTIGVY. At 260-272 the chain is on the extracellular side; the sequence is LCPSSVLTTVKEK. Residues 273 to 292 form a helical membrane-spanning segment; that stretch reads ASAVMYTAVTPMLNPFIYSL. At 293 to 313 the chain is on the cytoplasmic side; sequence RNRDLKGALRKLVNRKITSSS.

This sequence belongs to the G-protein coupled receptor 1 family.

The protein resides in the cell membrane. Its function is as follows. Odorant receptor. In Homo sapiens (Human), this protein is Olfactory receptor 1M1.